The chain runs to 214 residues: Redox-sensing transcriptional repressor Rex (214 aa).

The segment at residues 17–56 (LYYRIFKRFHADQVEKASSKQIADAMGIDSATVRRDFSYF) is a DNA-binding region (H-T-H motif). 91–96 (GCGNIG) is an NAD(+) binding site.

Belongs to the transcriptional regulatory Rex family. In terms of assembly, homodimer.

Its subcellular location is the cytoplasm. Modulates transcription in response to changes in cellular NADH/NAD(+) redox state. The sequence is that of Redox-sensing transcriptional repressor Rex from Streptococcus pyogenes serotype M4 (strain MGAS10750).